The chain runs to 300 residues: FeMo cofactor biosynthesis protein NifB (300 aa).

The 243-residue stretch at 24–266 (HDKVGRVHLP…PQFRACGQCR (243 aa)) folds into the Radical SAM core domain. C38, C42, and C45 together coordinate [4Fe-4S] cluster. Positions 93, 144, and 196 each coordinate S-adenosyl-L-methionine. Residues C262 and C265 each contribute to the [4Fe-4S] cluster site.

Belongs to the radical SAM superfamily. NifB family. As to quaternary structure, monomer. [4Fe-4S] cluster is required as a cofactor.

Its pathway is cofactor biosynthesis; Fe-Mo cofactor biosynthesis. Its function is as follows. Involved in the biosynthesis of the iron-molybdenum cofactor (FeMo-co or M-cluster) found in the dinitrogenase enzyme of the nitrogenase complex in nitrogen-fixing microorganisms. NifB catalyzes the crucial step of radical SAM-dependent carbide insertion that occurs concomitant with the insertion of a 9th sulfur and the rearrangement/coupling of two [4Fe-4S] clusters into a [8Fe-9S-C] cluster, the precursor to the M-cluster. This is FeMo cofactor biosynthesis protein NifB from Methanocaldococcus jannaschii (strain ATCC 43067 / DSM 2661 / JAL-1 / JCM 10045 / NBRC 100440) (Methanococcus jannaschii).